We begin with the raw amino-acid sequence, 182 residues long: ATP synthase subunit delta (182 aa).

Belongs to the ATPase delta chain family. In terms of assembly, F-type ATPases have 2 components, F(1) - the catalytic core - and F(0) - the membrane proton channel. F(1) has five subunits: alpha(3), beta(3), gamma(1), delta(1), epsilon(1). F(0) has three main subunits: a(1), b(2) and c(10-14). The alpha and beta chains form an alternating ring which encloses part of the gamma chain. F(1) is attached to F(0) by a central stalk formed by the gamma and epsilon chains, while a peripheral stalk is formed by the delta and b chains.

Its subcellular location is the cell inner membrane. Its function is as follows. F(1)F(0) ATP synthase produces ATP from ADP in the presence of a proton or sodium gradient. F-type ATPases consist of two structural domains, F(1) containing the extramembraneous catalytic core and F(0) containing the membrane proton channel, linked together by a central stalk and a peripheral stalk. During catalysis, ATP synthesis in the catalytic domain of F(1) is coupled via a rotary mechanism of the central stalk subunits to proton translocation. This protein is part of the stalk that links CF(0) to CF(1). It either transmits conformational changes from CF(0) to CF(1) or is implicated in proton conduction. This Histophilus somni (strain 129Pt) (Haemophilus somnus) protein is ATP synthase subunit delta.